The sequence spans 61 residues: Probable tautomerase spyM18_1099 (61 aa).

The active-site Proton acceptor; via imino nitrogen is the proline 2.

The protein belongs to the 4-oxalocrotonate tautomerase family.

The polypeptide is Probable tautomerase spyM18_1099 (Streptococcus pyogenes serotype M18 (strain MGAS8232)).